A 416-amino-acid chain; its full sequence is Gamma-glutamyl phosphate reductase (416 aa).

This sequence belongs to the gamma-glutamyl phosphate reductase family.

Its subcellular location is the cytoplasm. The catalysed reaction is L-glutamate 5-semialdehyde + phosphate + NADP(+) = L-glutamyl 5-phosphate + NADPH + H(+). Its pathway is amino-acid biosynthesis; L-proline biosynthesis; L-glutamate 5-semialdehyde from L-glutamate: step 2/2. In terms of biological role, catalyzes the NADPH-dependent reduction of L-glutamate 5-phosphate into L-glutamate 5-semialdehyde and phosphate. The product spontaneously undergoes cyclization to form 1-pyrroline-5-carboxylate. The protein is Gamma-glutamyl phosphate reductase of Streptococcus equi subsp. zooepidemicus (strain MGCS10565).